A 515-amino-acid polypeptide reads, in one-letter code: Maturase K (515 aa).

Belongs to the intron maturase 2 family. MatK subfamily.

It localises to the plastid. It is found in the chloroplast. Usually encoded in the trnK tRNA gene intron. Probably assists in splicing its own and other chloroplast group II introns. The sequence is that of Maturase K from Pinus halepensis (Aleppo pine).